A 34-amino-acid polypeptide reads, in one-letter code: U1-poneritoxin-Na2a (34 aa).

Expressed by the venom gland.

The protein localises to the secreted. Functionally, may have antimicrobial properties, like most ant linear peptides. The polypeptide is U1-poneritoxin-Na2a (Neoponera apicalis (Ant)).